The following is a 360-amino-acid chain: MAGHLASDFAFSPPPGGGGDGPGGPEPGWVDPRTWMSFQGPPGGSGIGPGVVPGAEVWGLPPCPPPYDLCGGMAYCAPQVGVGPVPPGGLETPQPEGEAGAGVESNSEGASPDPCAAPAGAPKLDKEKLEPNPEESQDIKALQKDLEQFAKLLKQKRITLGYTQADVGLTLGVLFGKVFSQTTICRFEALQLSFKNMCKLRPLLQKWVEEADNNENLQEICKAETLVQARKRKRTSIENRVRGNLESMFLQCPKPTLQQISHIAQQLGLEKDVVRVWFCNRRQKGKRSSSDYSQREDFEAAGSPFTGGPVSSPLAPGPHFGTPGYGGPHFTTLYSSVPFPEGEVFPSVSVTALGSPMHAN.

Disordered stretches follow at residues 1–48 (MAGH…SGIG) and 86–137 (PPGG…EESQ). The short motif at 4–12 (HLASDFAFS) is the 9aaTAD element. Phosphoserine; by MAPK is present on Ser-111. Lys-123 is covalently cross-linked (Glycyl lysine isopeptide (Lys-Gly) (interchain with G-Cter in SUMO)). Residues 123–137 (KLDKEKLEPNPEESQ) show a composition bias toward basic and acidic residues. The 75-residue stretch at 138–212 (DIKALQKDLE…LLQKWVEEAD (75 aa)) folds into the POU-specific domain. DNA-binding residues include Arg-157 and Gln-164. DNA-binding stretches follow at residues 180–186 (SQTTICR) and 193–196 (SFKN). A DNA-binding region (homeobox) is located at residues 230–289 (RKRKRTSIENRVRGNLESMFLQCPKPTLQQISHIAQQLGLEKDVVRVWFCNRRQKGKRSS). Thr-235 bears the Phosphothreonine mark. 4 positions are modified to phosphoserine: Ser-236, Ser-289, Ser-290, and Ser-355. Positions 287–322 (RSSSDYSQREDFEAAGSPFTGGPVSSPLAPGPHFGT) are disordered.

Belongs to the POU transcription factor family. Class-5 subfamily. As to quaternary structure, interacts with PKM. Interacts with WWP2. Interacts with UBE2I and ZSCAN10. Interacts with PCGF1. Interacts with ESRRB; recruits ESRRB near the POU5F1-SOX2 element in the NANOG proximal promoter; the interaction is DNA independent. Interacts with MAPK8 and MAPK9; the interaction allows MAPK8 and MAPK9 to phosphorylate POU5F1 on Ser-355. Interacts (when phosphorylated on Ser-355) with FBXW8. Interacts with FBXW4. Interacts with SOX2 and SOX15; binds synergistically with either SOX2 or SOX15 to DNA. Interacts with DDX56. Post-translationally, sumoylation enhances the protein stability, DNA binding and transactivation activity. Sumoylation is required for enhanced YES1 expression. In terms of processing, ubiquitinated; undergoes 'Lys-63'-linked polyubiquitination by WWP2 leading to proteasomal degradation. ERK1/2-mediated phosphorylation at Ser-111 promotes nuclear exclusion and proteasomal degradation. Phosphorylation at Thr-235 and Ser-236 decrease DNA-binding and alters ability to activate transcription. Expressed in immature oocytes.

It localises to the cytoplasm. It is found in the nucleus. Its function is as follows. Transcription factor that binds to the octamer motif (5'-ATTTGCAT-3'). Forms a trimeric complex with SOX2 or SOX15 on DNA and controls the expression of a number of genes involved in embryonic development such as YES1, FGF4, UTF1 and ZFP206. Critical for early embryogenesis and for embryonic stem cell pluripotency. The sequence is that of POU domain, class 5, transcription factor 1 (POU5F1) from Bos taurus (Bovine).